Consider the following 325-residue polypeptide: Pyruvate dehydrogenase E1 component subunit beta (325 aa).

Glu-60 is a binding site for thiamine diphosphate.

As to quaternary structure, heterodimer of an alpha and a beta chain. Thiamine diphosphate serves as cofactor.

The catalysed reaction is N(6)-[(R)-lipoyl]-L-lysyl-[protein] + pyruvate + H(+) = N(6)-[(R)-S(8)-acetyldihydrolipoyl]-L-lysyl-[protein] + CO2. In terms of biological role, the pyruvate dehydrogenase complex catalyzes the overall conversion of pyruvate to acetyl-CoA and CO(2). It contains multiple copies of three enzymatic components: pyruvate dehydrogenase (E1), dihydrolipoamide acetyltransferase (E2) and lipoamide dehydrogenase (E3). This is Pyruvate dehydrogenase E1 component subunit beta (pdhB) from Staphylococcus epidermidis (strain ATCC 35984 / DSM 28319 / BCRC 17069 / CCUG 31568 / BM 3577 / RP62A).